An 836-amino-acid chain; its full sequence is Tuftelin-interacting protein 11 (836 aa).

The segment covering 1 to 13 (MSLSHLYRDGEGH) has biased composition (basic and acidic residues). 3 disordered regions span residues 1–31 (MSLS…DWDL), 54–73 (WAER…RARD), and 85–136 (LKKG…AGGT). The segment at 1 to 50 (MSLSHLYRDGEGHMDDDEDERENFEITDWDLQNEFNPNRQRHWQTKEEAT) is required for interaction with DHX15. Serine 2 is subject to Phosphoserine. Positions 14–28 (MDDDEDERENFEITD) are enriched in acidic residues. Basic and acidic residues predominate over residues 54–64 (WAERDSDEERP). 2 positions are modified to phosphoserine: serine 59 and serine 98. The span at 91–102 (EEAELEDSDDEE) shows a compositional bias: acidic residues. Positions 103 to 116 (KPVKQDEFPKDFGP) are enriched in basic and acidic residues. Serine 144 is modified (phosphoserine). The region spanning 149 to 195 (TKGIGQKLLQKMGYVPGRGLGKNAQGIINPIEAKQRKGKGAVGAYGS) is the G-patch domain. The interval 183 to 236 (QRKGKGAVGAYGSERTTQSLQDFPVVDSEEEAEEEFQKELSQWRKDPSGSKKKP) is disordered. At serine 210 the chain carries Phosphoserine. A compositionally biased stretch (basic and acidic residues) spans 217 to 231 (EFQKELSQWRKDPSG). A Nuclear localization signal motif is present at residues 699–704 (VKDKFN). A required for nuclear speckle localization region spans residues 709–733 (IMNRAVSSNVGAYMQPGARENIAYL).

This sequence belongs to the TFP11/STIP family. Identified in the spliceosome C complex. Found in the Intron Large (IL) complex, a post-mRNA release spliceosomal complex containing the excised intron, U2, U5 and U6 snRNPs, and splicing factors. Interacts with TUFT1. Interacts with DHX15; indicative for a recruitment of DHX15 to the IL complex. Interacts with GCFC2.

The protein resides in the cytoplasm. It localises to the nucleus. Functionally, involved in pre-mRNA splicing, specifically in spliceosome disassembly during late-stage splicing events. Intron turnover seems to proceed through reactions in two lariat-intron associated complexes termed Intron Large (IL) and Intron Small (IS). In cooperation with DHX15 seems to mediate the transition of the U2, U5 and U6 snRNP-containing IL complex to the snRNP-free IS complex leading to efficient debranching and turnover of excised introns. May play a role in the differentiation of ameloblasts and odontoblasts or in the forming of the enamel extracellular matrix. In Sus scrofa (Pig), this protein is Tuftelin-interacting protein 11 (TFIP11).